The sequence spans 248 residues: Exosome complex component Rrp41 (248 aa).

Belongs to the RNase PH family. Rrp41 subfamily. Component of the archaeal exosome complex. Forms a hexameric ring-like arrangement composed of 3 Rrp41-Rrp42 heterodimers. The hexameric ring associates with a trimer of Rrp4 and/or Csl4 subunits.

The protein localises to the cytoplasm. In terms of biological role, catalytic component of the exosome, which is a complex involved in RNA degradation. Has 3'-&gt;5' exoribonuclease activity. Can also synthesize heteromeric RNA-tails. The chain is Exosome complex component Rrp41 from Thermoplasma acidophilum (strain ATCC 25905 / DSM 1728 / JCM 9062 / NBRC 15155 / AMRC-C165).